The following is a 1070-amino-acid chain: DNA-directed RNA polymerase subunit beta (1070 aa).

The protein belongs to the RNA polymerase beta chain family. In terms of assembly, in plastids the minimal PEP RNA polymerase catalytic core is composed of four subunits: alpha, beta, beta', and beta''. When a (nuclear-encoded) sigma factor is associated with the core the holoenzyme is formed, which can initiate transcription.

It is found in the plastid. It localises to the chloroplast. It catalyses the reaction RNA(n) + a ribonucleoside 5'-triphosphate = RNA(n+1) + diphosphate. Its function is as follows. DNA-dependent RNA polymerase catalyzes the transcription of DNA into RNA using the four ribonucleoside triphosphates as substrates. The protein is DNA-directed RNA polymerase subunit beta of Chaetosphaeridium globosum (Charophycean green alga).